A 235-amino-acid polypeptide reads, in one-letter code: MSRPVIVALDLDNEKKLNELLPKLGKPENVFIKIGMELFFNEGPKIVKQLSEQGYQIFLDLKMNDIPNTVYNGAKALARLGITYTTVHALGGSQMIKAAKDGLIAGTPIDKNVPKLLAVTELTSISDEILHYEQNCNLSMNDQVLSLATTAKKAGADGVICSPLEVKDLRQKVGEDFLYVTPGIRPAGNAKDDQSRVATPLQAKEWGSTAIVVGRPITLATDPEAAYEAIKKEFN.

Substrate-binding positions include D10, K33, 60–69 (DLKMNDIPNT), T123, R185, Q194, G214, and R215. K62 acts as the Proton donor in catalysis.

This sequence belongs to the OMP decarboxylase family. Type 1 subfamily. Homodimer.

The enzyme catalyses orotidine 5'-phosphate + H(+) = UMP + CO2. It functions in the pathway pyrimidine metabolism; UMP biosynthesis via de novo pathway; UMP from orotate: step 2/2. In terms of biological role, catalyzes the decarboxylation of orotidine 5'-monophosphate (OMP) to uridine 5'-monophosphate (UMP). This Lactobacillus johnsonii (strain CNCM I-12250 / La1 / NCC 533) protein is Orotidine 5'-phosphate decarboxylase.